The chain runs to 149 residues: Large ribosomal subunit protein bL9 (149 aa).

Belongs to the bacterial ribosomal protein bL9 family.

Binds to the 23S rRNA. This chain is Large ribosomal subunit protein bL9, found in Laribacter hongkongensis (strain HLHK9).